The chain runs to 123 residues: Protein Wnt-7b (123 aa).

Residue S1 is the site of O-palmitoleoyl serine; by PORCN attachment. A disordered linker region spans residues 33 to 61 (VEAVRATRLRQPTFLKIKKPRTYRKPMVT). C89 and C104 are disulfide-bonded. N90 is a glycosylation site (N-linked (GlcNAc...) asparagine).

This sequence belongs to the Wnt family. Palmitoleoylation is required for efficient binding to frizzled receptors. Depalmitoleoylation leads to Wnt signaling pathway inhibition.

It localises to the secreted. The protein resides in the extracellular space. It is found in the extracellular matrix. Functionally, ligand for members of the frizzled family of seven transmembrane receptors that functions in the canonical Wnt/beta-catenin signaling pathway. Required for normal fusion of the chorion and the allantois during placenta development. Required for central nervous system (CNS) angiogenesis and blood-brain barrier regulation. The protein is Protein Wnt-7b (WNT-7B) of Alopias vulpinus (Common thresher shark).